Reading from the N-terminus, the 318-residue chain is Ribokinase (318 aa).

Substrate-binding positions include 12–14, 40–44, and Glu-141; these read NWD and GKAAN. ATP-binding positions include Asn-188 and 235–240; that span reads TLGGNG. K(+) is bound by residues Asp-264 and Ser-266. 269-270 contributes to the ATP binding site; sequence GD. Position 270 (Asp-270) interacts with substrate. Catalysis depends on Asp-270, which acts as the Proton acceptor. Positions 301, 304, 306, and 310 each coordinate K(+).

The protein belongs to the carbohydrate kinase PfkB family. Ribokinase subfamily. In terms of assembly, homodimer. Requires Mg(2+) as cofactor.

Its subcellular location is the cytoplasm. It localises to the nucleus. The catalysed reaction is D-ribose + ATP = D-ribose 5-phosphate + ADP + H(+). It participates in carbohydrate metabolism; D-ribose degradation; D-ribose 5-phosphate from beta-D-ribopyranose: step 2/2. With respect to regulation, activated by a monovalent cation that binds near, but not in, the active site. The most likely occupant of the site in vivo is potassium. Ion binding induces a conformational change that may alter substrate affinity. In terms of biological role, catalyzes the phosphorylation of ribose at O-5 in a reaction requiring ATP and magnesium. The resulting D-ribose-5-phosphate can then be used either for sythesis of nucleotides, histidine, and tryptophan, or as a component of the pentose phosphate pathway. This chain is Ribokinase (rbsk), found in Dictyostelium discoideum (Social amoeba).